Consider the following 111-residue polypeptide: Large ribosomal subunit protein uL24 (111 aa).

This sequence belongs to the universal ribosomal protein uL24 family. Part of the 50S ribosomal subunit.

In terms of biological role, one of two assembly initiator proteins, it binds directly to the 5'-end of the 23S rRNA, where it nucleates assembly of the 50S subunit. Functionally, one of the proteins that surrounds the polypeptide exit tunnel on the outside of the subunit. The chain is Large ribosomal subunit protein uL24 from Bifidobacterium animalis subsp. lactis (strain AD011).